Reading from the N-terminus, the 439-residue chain is Innexin-19 (439 aa).

The next 4 helical transmembrane spans lie at 33-53 (PLIL…GTPI), 103-123 (QWVP…CIFW), 199-219 (IVYS…FFIL), and 285-305 (VFAF…CSFI).

The protein belongs to the pannexin family.

Its subcellular location is the cell membrane. It localises to the cell junction. The protein resides in the gap junction. Functionally, structural component of the gap junctions that specifically coordinates left-right asymmetry in the developing nervous system. Acts by forming gap junction network linking embryonic neurons and providing electrical coupling between cells, leading to promote or inhibit AWC signaling. This chain is Innexin-19 (inx-19), found in Caenorhabditis briggsae.